The primary structure comprises 281 residues: sn-glycerol-3-phosphate transport system permease protein UgpE (281 aa).

Helical transmembrane passes span 14-34 (VMLI…FVAA), 85-105 (LAIT…IVYF), 113-133 (FFWM…FPTV), 142-162 (MDSY…TFLF), 188-210 (FFDM…TFIY), and 247-267 (WNQV…VVLL). Residues 77 to 268 (LLNSFVMALA…LPPLLVVLLM (192 aa)) enclose the ABC transmembrane type-1 domain.

Belongs to the binding-protein-dependent transport system permease family. UgpAE subfamily. The complex is composed of two ATP-binding proteins (UgpC), two transmembrane proteins (UgpA and UgpE) and a solute-binding protein (UgpB).

It is found in the cell inner membrane. Its function is as follows. Part of the ABC transporter complex UgpBAEC involved in sn-glycerol-3-phosphate (G3P) import. Probably responsible for the translocation of the substrate across the membrane. This Pectobacterium atrosepticum (strain SCRI 1043 / ATCC BAA-672) (Erwinia carotovora subsp. atroseptica) protein is sn-glycerol-3-phosphate transport system permease protein UgpE (ugpE).